A 72-amino-acid polypeptide reads, in one-letter code: Small ribosomal subunit protein bS18 (72 aa).

The protein belongs to the bacterial ribosomal protein bS18 family. As to quaternary structure, part of the 30S ribosomal subunit. Forms a tight heterodimer with protein bS6.

Functionally, binds as a heterodimer with protein bS6 to the central domain of the 16S rRNA, where it helps stabilize the platform of the 30S subunit. The sequence is that of Small ribosomal subunit protein bS18 from Trichodesmium erythraeum (strain IMS101).